We begin with the raw amino-acid sequence, 137 residues long: Transcription antitermination protein NusB (137 aa).

The protein belongs to the NusB family.

Its function is as follows. Involved in transcription antitermination. Required for transcription of ribosomal RNA (rRNA) genes. Binds specifically to the boxA antiterminator sequence of the ribosomal RNA (rrn) operons. This is Transcription antitermination protein NusB from Clavibacter sepedonicus (Clavibacter michiganensis subsp. sepedonicus).